We begin with the raw amino-acid sequence, 216 residues long: Trimethylamine corrinoid protein 1 (216 aa).

In terms of domain architecture, B12-binding N-terminal spans 1–92; sequence MANKEEIIAK…EMEKRKSQTK (92 aa). The B12-binding domain occupies 94–216; that stretch reads LGTIVIGTIE…VVSKVKAALL (123 aa). His-107 contributes to the methylcob(III)alamin binding site.

The protein belongs to the methylamine corrinoid protein family. In terms of assembly, can form a complex with MttB.

The protein operates within one-carbon metabolism; methanogenesis from trimethylamine. In terms of biological role, acts probably as a methyl group carrier between MttB and either MtbA or MtaA. In Methanosarcina mazei (strain ATCC BAA-159 / DSM 3647 / Goe1 / Go1 / JCM 11833 / OCM 88) (Methanosarcina frisia), this protein is Trimethylamine corrinoid protein 1 (mttC1).